Here is a 225-residue protein sequence, read N- to C-terminus: Probable molybdenum cofactor guanylyltransferase (225 aa).

Residues 20-22 (LAG), K33, D88, and D117 each bind GTP. Residue D117 participates in Mg(2+) binding.

It belongs to the MobA family. Mg(2+) serves as cofactor.

Its subcellular location is the cytoplasm. The catalysed reaction is Mo-molybdopterin + GTP + H(+) = Mo-molybdopterin guanine dinucleotide + diphosphate. Its function is as follows. Transfers a GMP moiety from GTP to Mo-molybdopterin (Mo-MPT) cofactor (Moco or molybdenum cofactor) to form Mo-molybdopterin guanine dinucleotide (Mo-MGD) cofactor. In Methanosarcina acetivorans (strain ATCC 35395 / DSM 2834 / JCM 12185 / C2A), this protein is Probable molybdenum cofactor guanylyltransferase.